The following is a 262-amino-acid chain: Sulfur carrier protein FdhD (262 aa).

The active-site Cysteine persulfide intermediate is C107.

This sequence belongs to the FdhD family.

It localises to the cytoplasm. Functionally, required for formate dehydrogenase (FDH) activity. Acts as a sulfur carrier protein that transfers sulfur from IscS to the molybdenum cofactor prior to its insertion into FDH. This is Sulfur carrier protein FdhD from Bacillus subtilis (strain 168).